We begin with the raw amino-acid sequence, 1076 residues long: MSSQSHPDGLSGRDQPVELLNPARVNHMPSTVDVATALPLQVAPTAVPMDLRLDHQFSLPLEPALREQQLQQELLALKQKQQIQRQILIAEFQRQHEQLSRQHEAQLHEHIKQQQEMLAMKHQQELLEHQRKLERHRQEQELEKQHREQKLQQLKNKEKGKESAVASTEVKMKLQEFVLNKKKALAHRNLNHCISSDPRYWYGKTQHSSLDQSSPPQSGVSASYNHPVLGMYDAKDDFPLRKTASEPNLKLRSRLKQKVAERRSSPLLRRKDGPVATALKKRPLDVTDSACSSAPGSGPSSPNSSSGNVSTENGIAPTVPSAPAETSLAHRLVTREGSVAPLPLYTSPSLPNITLGLPATGPAAGAAGQQDAERLALPALQQRILFPGTHLTPYLSTSPLERDGAAAHNPLLQHMVLLEQPPTQTPLVTGLGALPLHSQSLVGADRVSPSIHKLRQHRPLGRTQSAPLPQNAQALQHLVIQQQHQQFLEKHKQQFQQQQLHLSKIISKPSEPPRQPESHPEETEEELREHQALLDEPYLDRLPGQKEPSLAGVQVKQEPIESEEEEAEATRETEPGQRPATEQELLFRQQALLLEQQRIHQLRNYQASMEAAGIPVSFGSHRPLSRAQSSPASATFPMSVQEPPTKPRFTTGLVYDTLMLKHQCTCGNTNSHPEHAGRIQSIWSRLQETGLRGKCECIRGRKATLEELQTVHSEAHTLLYGTNPLNRQKLDSSLTSVFVRLPCGGVGVDSDTIWNEVHSSGAARLAVGCVVELVFKVATGELKNGFAVVRPPGHHAEESTPMGFCYFNSVAVAAKLLQQRLNVSKILIVDWDVHHGNGTQQAFYNDPNVLYMSLHRYDDGNFFPGSGAPDEVGTGPGVGFNVNMAFTGGLEPPMGDAEYLAAFRTVVMPIANEFAPDVVLVSSGFDAVEGHPTPLGGYNLSAKCFGYLTKQLMGLAGGRLVLALEGGHDLTAICDASEACVSALLGNELEPLPEKVLHQRPNANAVHSMEKVMDIHSKYWRCLQRLSSTVGHSLIEAQKCEKEEAETVTAMASLSVGVKPAEKRSEEEPMEEEPPL.

Residues arginine 66–glutamate 169 adopt a coiled-coil conformation. Residues methionine 117–glutamate 312 form an interaction with MEF2A region. Basic and acidic residues predominate over residues lysine 132 to glutamate 162. Disordered regions lie at residues lysine 132 to alanine 166, threonine 205 to asparagine 225, and proline 239 to proline 323. Residues threonine 205–tyrosine 224 are compositionally biased toward polar residues. A Phosphoserine modification is found at serine 209. Phosphoserine; by CaMK4 and SIK1 is present on serine 245. Residues lysine 258–glycine 273 are compositionally biased toward basic and acidic residues. Residues serine 289–serine 310 show a composition bias toward low complexity. The short motif at proline 348–isoleucine 353 is the PxLPxI/L motif; mediates interaction with ANKRA2 and 14-3-3 proteins element. Position 349 is a phosphoserine (serine 349). Serine 465 is subject to Phosphoserine; by CaMK4 and SIK1. Disordered stretches follow at residues isoleucine 506 to glutamate 529, arginine 541 to alanine 580, and arginine 622 to threonine 645. Residues arginine 514–glutamate 529 are compositionally biased toward basic and acidic residues. A Glycyl lysine isopeptide (Lys-Gly) (interchain with G-Cter in SUMO) cross-link involves residue lysine 556. Serine 562 bears the Phosphoserine mark. Over residues arginine 626 to methionine 638 the composition is skewed to polar residues. Serine 629 carries the post-translational modification Phosphoserine; by CaMK4. Serine 630 is subject to Phosphoserine. Residues glycine 652–leucine 1076 form a histone deacetylase region. 4 residues coordinate Zn(2+): cysteine 664, cysteine 666, histidine 672, and cysteine 743. The active site involves histidine 795. Positions glutamate 1043 to leucine 1076 match the Nuclear export signal motif.

Belongs to the histone deacetylase family. HD type 2 subfamily. Homodimer. Homodimerization via its N-terminal domain. Interacts with HDAC7. Interacts with MEF2A, MEF2C, MEF2D, MORC2 and NR2C1. Interacts with a 14-3-3 chaperone proteins in a phosphorylation dependent manner. Interacts with 14-3-3 protein YWHAB. Interacts with BTBD14B. Interacts with KDM5B. Interacts (via PxLPxI/L motif) with ANKRA2 (via ankyrin repeats). Interacts with CUL7 (as part of the 3M complex); negatively regulated by ANKRA2. Interacts with EP300 in the presence of TFAP2C. Interacts with AHRR. Interacts with MYOCD. Interacts with HSPA1A and HSPA1B leading to their deacetylation at 'Lys-77'. Interacts with ZBTB7B; the interaction allows the recruitment of HDAC4 on CD8 loci for deacetylation and possible inhibition of CD8 genes expression. Interacts with DHX36. Interacts with SIK3; this interaction leads to HDAC4 retention in the cytoplasm. Interacts with ZNF638. Phosphorylated by CaMK4 at Ser-245, Ser-465 and Ser-629. Phosphorylation at other residues by CaMK2D is required for the interaction with 14-3-3. Phosphorylation at Ser-349, within the PxLPxI/L motif, impairs the binding of ANKRA2 but generates a high-affinity docking site for 14-3-3. In terms of processing, sumoylation on Lys-556 is promoted by the E3 SUMO-protein ligase RANBP2, and prevented by phosphorylation by CaMK4.

It localises to the nucleus. The protein localises to the cytoplasm. The catalysed reaction is N(6)-acetyl-L-lysyl-[histone] + H2O = L-lysyl-[histone] + acetate. Functionally, responsible for the deacetylation of lysine residues on the N-terminal part of the core histones (H2A, H2B, H3 and H4). Histone deacetylation gives a tag for epigenetic repression and plays an important role in transcriptional regulation, cell cycle progression and developmental events. Histone deacetylases act via the formation of large multiprotein complexes. Involved in muscle maturation via its interaction with the myocyte enhancer factors such as MEF2A, MEF2C and MEF2D. Deacetylates HSPA1A and HSPA1A at 'Lys-77' leading to their preferential binding to co-chaperone STUB1. The polypeptide is Histone deacetylase 4 (Hdac4) (Mus musculus (Mouse)).